We begin with the raw amino-acid sequence, 147 residues long: 3-dehydroquinate dehydratase 2 (147 aa).

Catalysis depends on Tyr23, which acts as the Proton acceptor. Substrate is bound by residues Asn74, His80, and Asp87. His100 functions as the Proton donor in the catalytic mechanism. Residues 101 to 102 and Arg111 each bind substrate; that span reads IS.

It belongs to the type-II 3-dehydroquinase family. Homododecamer.

The enzyme catalyses 3-dehydroquinate = 3-dehydroshikimate + H2O. It participates in metabolic intermediate biosynthesis; chorismate biosynthesis; chorismate from D-erythrose 4-phosphate and phosphoenolpyruvate: step 3/7. In terms of biological role, catalyzes a trans-dehydration via an enolate intermediate. This is 3-dehydroquinate dehydratase 2 (aroQ2) from Agrobacterium fabrum (strain C58 / ATCC 33970) (Agrobacterium tumefaciens (strain C58)).